The primary structure comprises 387 residues: 1-deoxy-D-xylulose 5-phosphate reductoisomerase (387 aa).

Residues T10, G11, S12, I13, and N124 each contribute to the NADPH site. 1-deoxy-D-xylulose 5-phosphate is bound at residue K125. E126 serves as a coordination point for NADPH. Mn(2+) is bound at residue D150. S151, E152, S176, and H199 together coordinate 1-deoxy-D-xylulose 5-phosphate. E152 is a binding site for Mn(2+). Residue G205 coordinates NADPH. 1-deoxy-D-xylulose 5-phosphate-binding residues include S212, N217, K218, and E221. E221 provides a ligand contact to Mn(2+).

It belongs to the DXR family. Mg(2+) is required as a cofactor. The cofactor is Mn(2+).

It carries out the reaction 2-C-methyl-D-erythritol 4-phosphate + NADP(+) = 1-deoxy-D-xylulose 5-phosphate + NADPH + H(+). Its pathway is isoprenoid biosynthesis; isopentenyl diphosphate biosynthesis via DXP pathway; isopentenyl diphosphate from 1-deoxy-D-xylulose 5-phosphate: step 1/6. Its function is as follows. Catalyzes the NADPH-dependent rearrangement and reduction of 1-deoxy-D-xylulose-5-phosphate (DXP) to 2-C-methyl-D-erythritol 4-phosphate (MEP). This is 1-deoxy-D-xylulose 5-phosphate reductoisomerase from Clostridium beijerinckii (strain ATCC 51743 / NCIMB 8052) (Clostridium acetobutylicum).